A 251-amino-acid polypeptide reads, in one-letter code: Imidazole glycerol phosphate synthase subunit HisF (251 aa).

Active-site residues include Asp-11 and Asp-130.

The protein belongs to the HisA/HisF family. In terms of assembly, heterodimer of HisH and HisF.

The protein resides in the cytoplasm. The enzyme catalyses 5-[(5-phospho-1-deoxy-D-ribulos-1-ylimino)methylamino]-1-(5-phospho-beta-D-ribosyl)imidazole-4-carboxamide + L-glutamine = D-erythro-1-(imidazol-4-yl)glycerol 3-phosphate + 5-amino-1-(5-phospho-beta-D-ribosyl)imidazole-4-carboxamide + L-glutamate + H(+). It functions in the pathway amino-acid biosynthesis; L-histidine biosynthesis; L-histidine from 5-phospho-alpha-D-ribose 1-diphosphate: step 5/9. In terms of biological role, IGPS catalyzes the conversion of PRFAR and glutamine to IGP, AICAR and glutamate. The HisF subunit catalyzes the cyclization activity that produces IGP and AICAR from PRFAR using the ammonia provided by the HisH subunit. This is Imidazole glycerol phosphate synthase subunit HisF from Thiobacillus denitrificans (strain ATCC 25259 / T1).